We begin with the raw amino-acid sequence, 615 residues long: MQICASIAQFLAWVSFLVLLATVGSSSSSESLLNCQPLDHHLVNPSRLLGFLRAMSSVNDFITNDKLWVVSSITDVSPPIYVFLQCREDLSVSDCRHCFNESRLELERKCSGSGGRIHSDRCFLRFDDRDFSEEFVDPTFDKANCEETGTGFGEFWRFLDEALVNVTLKAVKNGGFGAASVIKTEAVYALAQCWQTLDENTCRECLVNARSSLRACDGHEARAFFTGCYLKYSTHKFFDDAAEHKPDADQRNFIRSSFFPHLSDRDVTRLAIAAISLSILTSLGAFISYRRVSRKRKAQVPSCVNFKYEMLEKATESFHDSMKLGQGGAGSVYKGILPDGRIVAVKKLFFNTREWADQFFNEVNLISGVQHKNLVRLLGCSIEGPKSLLVYEYVHNRSLDQILFMKNTVHILSWKQRFNIIIGISEGLEYLHRGSEVKIIHRDIKTSNILLDRNLSPKIADFGLIRSMGTDKTQTNTGIAGTLGYLAPEYLIKGQLTEKADVYAFGVLIIEIVTGKKNNAFTQGTSSVLYSVWEHFKANTLDRSIDPRLKGSFVEEEALKVLQIGLLCVQSSVELRPSMSEIVFMLQNKDSKFEYPKQPPFLSASVLMPDEETRV.

Positions 1-28 (MQICASIAQFLAWVSFLVLLATVGSSSS) are cleaved as a signal peptide. Gnk2-homologous domains follow at residues 29–131 (SESL…DRDF) and 137–237 (DPTF…THKF). At 29 to 266 (SESLLNCQPL…SFFPHLSDRD (238 aa)) the chain is on the extracellular side. N-linked (GlcNAc...) asparagine glycosylation is found at N100 and N165. The chain crosses the membrane as a helical span at residues 267-287 (VTRLAIAAISLSILTSLGAFI). Topologically, residues 288 to 615 (SYRRVSRKRK…VLMPDEETRV (328 aa)) are cytoplasmic. A Protein kinase domain is found at 318 to 602 (FHDSMKLGQG…FEYPKQPPFL (285 aa)). ATP-binding positions include 324–332 (LGQGGAGSV) and K346. D443 acts as the Proton acceptor in catalysis.

This sequence belongs to the protein kinase superfamily. Ser/Thr protein kinase family. CRK subfamily. In terms of tissue distribution, expressed in the whole plant at low levels.

The protein localises to the membrane. It carries out the reaction L-seryl-[protein] + ATP = O-phospho-L-seryl-[protein] + ADP + H(+). It catalyses the reaction L-threonyl-[protein] + ATP = O-phospho-L-threonyl-[protein] + ADP + H(+). The chain is Cysteine-rich receptor-like protein kinase 1 from Arabidopsis thaliana (Mouse-ear cress).